The sequence spans 124 residues: Large ribosomal subunit protein bL12 (124 aa).

It belongs to the bacterial ribosomal protein bL12 family. In terms of assembly, homodimer. Part of the ribosomal stalk of the 50S ribosomal subunit. Forms a multimeric L10(L12)X complex, where L10 forms an elongated spine to which 2 to 4 L12 dimers bind in a sequential fashion. Binds GTP-bound translation factors.

In terms of biological role, forms part of the ribosomal stalk which helps the ribosome interact with GTP-bound translation factors. Is thus essential for accurate translation. The polypeptide is Large ribosomal subunit protein bL12 (Wolinella succinogenes (strain ATCC 29543 / DSM 1740 / CCUG 13145 / JCM 31913 / LMG 7466 / NCTC 11488 / FDC 602W) (Vibrio succinogenes)).